The chain runs to 1336 residues: Zinc finger protein 335 (1336 aa).

2 disordered regions span residues 1–108 and 199–222; these read MEEN…LVHS and PTSTSTCLEPAEQPPGEPSSLAQP. Composition is skewed to low complexity over residues 31 to 45 and 54 to 65; these read TSEAVSADSTDAATA and SGVGQSSDSGSR. The segment at 247–270 adopts a C2H2-type 1 zinc-finger fold; that stretch reads FKCKMCQYRSSTKATLLRHMRERH. Disordered stretches follow at residues 282 to 398 and 415 to 442; these read AGKR…PSSS and VSQSDAENAAPSCQDEADVPPRRRGRPS. Residues 300-331 show a composition bias toward acidic residues; the sequence is EEGPEEEEEDDDIVDAGAIDDLEEDSDYNPAE. Positions 339 to 349 are enriched in low complexity; it reads LRLQRPTPSTL. The span at 350–361 shows a compositional bias: basic residues; it reads RPRRRPGRPRKL. Residues 362–373 are compositionally biased toward basic and acidic residues; the sequence is PRLETSDLHDGI. The span at 378-387 shows a compositional bias: polar residues; the sequence is VSSQSTQSPP. C2H2-type zinc fingers lie at residues 465–487, 495–517, 523–545, 562–584, 590–612, 621–643, 649–672, and 678–701; these read YLCRICGSRFLSHEDLRFHVNSH, FKCLQCSYRSRRWSSLKEHMFNH, YKCDECSYTSVYRKDVIRHAAVH, FPCPVCGRVYPMQKRLTQHMKTH, HMCDKCGKSFKKRYTFKMHLLTH, FKCEFCEFVCEDKKALLNHQLSH, FKCSFCPYRTFREDFLLSHVAVKH, and FACEYCHFSTRHKKNLRLHVRCRH. Disordered stretches follow at residues 732 to 766 and 961 to 1013; these read LKQQHSAAPGPPLSSAGPEAPQEPAPFQPPETPPL and LQCG…AAAS. Residues 752–766 are compositionally biased toward pro residues; it reads PQEPAPFQPPETPPL. 2 positions are modified to phosphoserine: serine 975 and serine 1006. C2H2-type zinc fingers lie at residues 1018 to 1040, 1046 to 1068, 1074 to 1096, and 1102 to 1125; these read FSCKVCSEAFPSRAEMESHKRAH, FKCPDCPFSARQWPEVRAHMAQH, HQCNQCSFASKNKKDLRRHMLTH, and FSCHVCGQRFNRNGHLKFHIQRLH. A Glycyl lysine isopeptide (Lys-Gly) (interchain with G-Cter in SUMO2) cross-link involves residue lysine 1021. A Phosphoserine modification is found at serine 1148.

It belongs to the krueppel C2H2-type zinc-finger protein family. Interacts with NCOA6; may enhance ligand-dependent transcriptional activation by nuclear hormone receptors. Interacts with CNOT6. Interacts with CNOT9; the interaction is direct. Component of a nuclear receptor-mediated transcription complex composed of at least ZNF335, CCAR2 and EMSY; the complex stimulates the transcription of nuclear receptor target genes such as SOX9 and HOXA1. Within the complex interacts with EMSY and interacts (via C-terminus) with CCAR2. Interacts with members of histone H3'Lys4'(H3K4) methyltransferase complexes ASH2L, CXXC1, KMT2A/MLL1, RBBP5, SETD1A and WDR5. Component of a histone methylation complex composed of at least ZNF335, RBBP5, ASH2L and WDR5; the complex may have histone H3-specific methyltransferase activity, however does not have specificity for 'Lys-4' of histone H3. Interacts with RBBP5 and WDR5. Interacts with ASHL2. Components of this complex may associate with components of the ZNF335-CCAR2-EMSY nuclear receptor-mediated transcription complex to form a complex at least composed of ZNF335, HCFC1, CCAR2, EMSY, MKI67, RBBP5, ASH2L and WDR5. Within this complex also interacts with HCFC1 and MKI67.

The protein resides in the nucleus. Functionally, component or associated component of some histone methyltransferase complexes may regulate transcription through recruitment of those complexes on gene promoters. Enhances ligand-dependent transcriptional activation by nuclear hormone receptors. Plays an important role in neural progenitor cell proliferation and self-renewal through the regulation of specific genes involved brain development, including REST. Also controls the expression of genes involved in somatic development and regulates, for instance, lymphoblast proliferation. The protein is Zinc finger protein 335 (Znf335) of Rattus norvegicus (Rat).